Here is a 456-residue protein sequence, read N- to C-terminus: Phospholipase A1 member A (456 aa).

A signal peptide spans 1–24; the sequence is MCPGLWGTCFWLWGSLLWLSIGRS. The active-site Nucleophile is the Ser166. Asp190 functions as the Charge relay system in the catalytic mechanism. Cys245 and Cys258 are disulfide-bonded. The active-site Charge relay system is His260. Cystine bridges form between Cys282-Cys293 and Cys296-Cys304. N-linked (GlcNAc...) asparagine glycosylation occurs at Asn365.

It belongs to the AB hydrolase superfamily. Lipase family.

Its subcellular location is the secreted. The catalysed reaction is a 1,2-diacyl-sn-glycero-3-phospho-L-serine + H2O = a 2-acyl-sn-glycero-3-phospho-L-serine + a fatty acid + H(+). The enzyme catalyses 1,2-di-(9Z)-octadecenoyl-sn-glycero-3-phospho-L-serine + H2O = 2-(9Z-octadecenoyl)-sn-glycero-3-phospho-L-serine + (9Z)-octadecenoate + H(+). It carries out the reaction 1-hexadecanoyl-2-(5Z,8Z,11Z,14Z-eicosatetraenoyl)-sn-glycero-3-phospho-L-serine + H2O = 2-(5Z,8Z,11Z,14Z)-eicosatetraenoyl-sn-glycero-3-phospho-L-serine + hexadecanoate + H(+). It catalyses the reaction a 1-acyl-sn-glycero-3-phospho-L-serine + H2O = sn-glycero-3-phospho-L-serine + a fatty acid + H(+). The catalysed reaction is 1-(9Z-octadecenoyl)-sn-glycero-3-phospho-L-serine + H2O = sn-glycero-3-phospho-L-serine + (9Z)-octadecenoate + H(+). Functionally, hydrolyzes the ester bond of the acyl group attached at the sn-1 position of phosphatidylserines (phospholipase A1 activity) and 1-acyl-2-lysophosphatidylserines (lysophospholipase activity) in the pathway of phosphatidylserines acyl chain remodeling. Cleaves phosphatidylserines exposed on the outer leaflet of the plasma membrane of apoptotic cells producing 2-acyl-1-lysophosphatidylserines, which in turn enhance mast cell activation and histamine production. Has no activity toward other glycerophospholipids including phosphatidylcholines, phosphatidylethanolamines, phosphatidic acids or phosphatidylinositols, or glycerolipids such as triolein. This is Phospholipase A1 member A from Rattus norvegicus (Rat).